A 151-amino-acid chain; its full sequence is Linear element protein Mug20 (151 aa).

The stretch at 56–140 (EEKLRALDKL…CAMEKLKMIE (85 aa)) forms a coiled coil.

In terms of assembly, component of linear elements (LinEs), which are similar to synaptonemal complexes, at least composed of rec27, rec25, rec10 and mug20. Interacts with rec10.

The protein resides in the cytoplasm. It is found in the nucleus. Its subcellular location is the chromosome. Its function is as follows. During meiotic DNA recombination, binds to and may help activate DNA double-strand break (DSB) hotspot sites. This Schizosaccharomyces pombe (strain 972 / ATCC 24843) (Fission yeast) protein is Linear element protein Mug20.